Consider the following 160-residue polypeptide: Cytochrome b6-f complex subunit 4 (160 aa).

3 consecutive transmembrane segments (helical) span residues 36-56 (LLYIFPVCIFGTIACTVGLSV), 95-115 (LLGVLLMAGVPVGLLTVPFIE), and 131-151 (TVFLLGTVVAIWLGIGAALPI).

Belongs to the cytochrome b family. PetD subfamily. As to quaternary structure, the 4 large subunits of the cytochrome b6-f complex are cytochrome b6, subunit IV (17 kDa polypeptide, petD), cytochrome f and the Rieske protein, while the 4 small subunits are petG, petL, petM and petN. The complex functions as a dimer.

It is found in the plastid. Its subcellular location is the chloroplast thylakoid membrane. Component of the cytochrome b6-f complex, which mediates electron transfer between photosystem II (PSII) and photosystem I (PSI), cyclic electron flow around PSI, and state transitions. This Chaetosphaeridium globosum (Charophycean green alga) protein is Cytochrome b6-f complex subunit 4.